A 26-amino-acid polypeptide reads, in one-letter code: Conotoxin Eb6.18 (26 aa).

Intrachain disulfides connect cysteine 7-cysteine 18 and cysteine 13-cysteine 25.

The protein belongs to the conotoxin O1 superfamily. As to expression, expressed by the venom duct.

It localises to the secreted. This chain is Conotoxin Eb6.18 (E1), found in Conus ebraeus (Hebrew cone).